The primary structure comprises 29 residues: Brevinin-2Ra (29 aa).

A disulfide bridge connects residues Cys23 and Cys29.

As to expression, expressed by the skin glands.

The protein resides in the secreted. In terms of biological role, antimicrobial peptide. This is Brevinin-2Ra from Pelophylax ridibundus (Marsh frog).